Reading from the N-terminus, the 329-residue chain is GTP 3',8-cyclase (329 aa).

A Radical SAM core domain is found at 8 to 234 (AFARKFYYLR…QLRQRSDGPA (227 aa)). Position 17 (Arg17) interacts with GTP. [4Fe-4S] cluster is bound by residues Cys24 and Cys28. Tyr30 is an S-adenosyl-L-methionine binding site. Residue Cys31 participates in [4Fe-4S] cluster binding. Residue Arg68 coordinates GTP. Gly72 lines the S-adenosyl-L-methionine pocket. Thr99 lines the GTP pocket. Position 123 (Ser123) interacts with S-adenosyl-L-methionine. Lys160 provides a ligand contact to GTP. An S-adenosyl-L-methionine-binding site is contributed by Met194. Residues Cys257 and Cys260 each contribute to the [4Fe-4S] cluster site. 262–264 (RLR) lines the GTP pocket. Cys274 is a binding site for [4Fe-4S] cluster.

The protein belongs to the radical SAM superfamily. MoaA family. In terms of assembly, monomer and homodimer. It depends on [4Fe-4S] cluster as a cofactor.

The enzyme catalyses GTP + AH2 + S-adenosyl-L-methionine = (8S)-3',8-cyclo-7,8-dihydroguanosine 5'-triphosphate + 5'-deoxyadenosine + L-methionine + A + H(+). It participates in cofactor biosynthesis; molybdopterin biosynthesis. In terms of biological role, catalyzes the cyclization of GTP to (8S)-3',8-cyclo-7,8-dihydroguanosine 5'-triphosphate. The polypeptide is GTP 3',8-cyclase (Shigella dysenteriae serotype 1 (strain Sd197)).